We begin with the raw amino-acid sequence, 124 residues long: Immunoglobulin lambda variable 5-52 (124 aa).

The N-terminal stretch at 1–19 is a signal peptide; the sequence is MAWTLLLLVLLSHCTGSLS. The tract at residues 20–44 is framework-1; that stretch reads QPVLTQPSSHSASSGASVRLTCMLS. In terms of domain architecture, Ig-like spans 21 to 124; the sequence is PVLTQPSSHS…CGTWHSNSKT (104 aa). Cys-41 and Cys-115 are joined by a disulfide. A complementarity-determining-1 region spans residues 45-53; sequence SGFSVGDFW. A framework-2 region spans residues 54 to 70; the sequence is IRWYQQKPGNPPRYLLY. The complementarity-determining-2 stretch occupies residues 71 to 77; sequence YHSDSNK. Residues 78–115 are framework-3; it reads GQGSGVPSRFSGSNDASANAGILRISGLQPEDEADYYC. Residues 116 to 124 are complementarity-determining-3; the sequence is GTWHSNSKT.

Immunoglobulins are composed of two identical heavy chains and two identical light chains; disulfide-linked.

It localises to the secreted. The protein resides in the cell membrane. In terms of biological role, v region of the variable domain of immunoglobulin light chains that participates in the antigen recognition. Immunoglobulins, also known as antibodies, are membrane-bound or secreted glycoproteins produced by B lymphocytes. In the recognition phase of humoral immunity, the membrane-bound immunoglobulins serve as receptors which, upon binding of a specific antigen, trigger the clonal expansion and differentiation of B lymphocytes into immunoglobulins-secreting plasma cells. Secreted immunoglobulins mediate the effector phase of humoral immunity, which results in the elimination of bound antigens. The antigen binding site is formed by the variable domain of one heavy chain, together with that of its associated light chain. Thus, each immunoglobulin has two antigen binding sites with remarkable affinity for a particular antigen. The variable domains are assembled by a process called V-(D)-J rearrangement and can then be subjected to somatic hypermutations which, after exposure to antigen and selection, allow affinity maturation for a particular antigen. In Homo sapiens (Human), this protein is Immunoglobulin lambda variable 5-52.